The following is a 241-amino-acid chain: MNENLQELIPTKLAAAIANPLFPAVDSQLRSGRHIGQEYLDNFAFLADFQNELDMFYRRYNVELIRAPEGFFYLRPKATTLIARSVLSELEMLVGKVLCYLYLSPERLAQQGIFSVQEVYDELLNLADESKLLKAVNQRSSGSDLDKQKLAEKVRAAVNRLRRLGMIHTVGEQNSGKFTISESVFRFGAEVRSGDDPREAQLRLIRDGEAATPDSLSQEKSAVKNDEEIEDELDEGLGEEE.

The tract at residues 207–241 (DGEAATPDSLSQEKSAVKNDEEIEDELDEGLGEEE) is disordered. Over residues 227–241 (EEIEDELDEGLGEEE) the composition is skewed to acidic residues.

It belongs to the MukE family. In terms of assembly, interacts, and probably forms a ternary complex, with MukF and MukB. The complex formation is stimulated by calcium or magnesium.

Its subcellular location is the cytoplasm. The protein resides in the nucleoid. Functionally, involved in chromosome condensation, segregation and cell cycle progression. May participate in facilitating chromosome segregation by condensation DNA from both sides of a centrally located replisome during cell division. Probably acts via its interaction with MukB and MukF. The sequence is that of Chromosome partition protein MukE from Mannheimia succiniciproducens (strain KCTC 0769BP / MBEL55E).